Consider the following 37-residue polypeptide: Large ribosomal subunit protein bL36 (37 aa).

Belongs to the bacterial ribosomal protein bL36 family.

The protein is Large ribosomal subunit protein bL36 of Psychromonas ingrahamii (strain DSM 17664 / CCUG 51855 / 37).